The chain runs to 251 residues: Dihydroorotate dehydrogenase B (NAD(+)), electron transfer subunit homolog (251 aa).

The FAD-binding FR-type domain occupies 2–101 (LAELNAEVLE…FLPLGKRLFS (100 aa)). [2Fe-2S] cluster contacts are provided by Cys217, Cys222, Cys225, and Cys238.

It belongs to the PyrK family. The cofactor is [2Fe-2S] cluster. FAD is required as a cofactor.

In Aquifex aeolicus (strain VF5), this protein is Dihydroorotate dehydrogenase B (NAD(+)), electron transfer subunit homolog.